Reading from the N-terminus, the 475-residue chain is Probable proline--tRNA ligase, mitochondrial (475 aa).

The transit peptide at 1–29 (MEGLLTRCRTLSALATCSLRHSRCIVRKC) directs the protein to the mitochondrion.

Belongs to the class-II aminoacyl-tRNA synthetase family.

It is found in the mitochondrion matrix. It carries out the reaction tRNA(Pro) + L-proline + ATP = L-prolyl-tRNA(Pro) + AMP + diphosphate. Its function is as follows. Mitochondrial aminoacyl-tRNA synthetase that catalyzes the specific attachment of the proline amino acid (aa) to the homologous transfer RNA (tRNA), further participating in protein synthesis. The reaction occurs in a two steps: proline is first activated by ATP to form Pro-AMP and then transferred to the acceptor end of tRNA(Pro). The polypeptide is Probable proline--tRNA ligase, mitochondrial (Pars2) (Rattus norvegicus (Rat)).